The chain runs to 1358 residues: Xanthine dehydrogenase/oxidase (1358 aa).

A 2Fe-2S ferredoxin-type domain is found at 8–95 (DELVFFVNGK…HVAVTTVEGI (88 aa)). Residues Cys-47, Cys-52, Cys-55, Cys-77, Cys-117, Cys-120, Cys-152, and Cys-154 each contribute to the [2Fe-2S] cluster site. Positions 255 to 440 (FKGERVMWIQ…LSVEIPYSKE (186 aa)) constitute an FAD-binding PCMH-type domain. FAD contacts are provided by residues 283-290 (LVVGNTEV), Phe-363, 373-377 (ALGGN), Asp-386, Leu-430, and Lys-448. 2 residues coordinate Mo-molybdopterin: Gln-796 and Phe-827. Substrate-binding residues include Glu-831 and Arg-909. Position 941 (Arg-941) interacts with Mo-molybdopterin. Substrate-binding residues include Phe-943 and Thr-1039. Ala-1108 contacts Mo-molybdopterin. The active-site Proton acceptor is the Glu-1290.

The protein belongs to the xanthine dehydrogenase family. Homodimer. Requires FAD as cofactor. It depends on Mo-molybdopterin as a cofactor. [2Fe-2S] cluster is required as a cofactor. In terms of tissue distribution, detected in liver (at protein level).

Its subcellular location is the peroxisome. It localises to the cytoplasm. It carries out the reaction xanthine + NAD(+) + H2O = urate + NADH + H(+). It catalyses the reaction hypoxanthine + NAD(+) + H2O = xanthine + NADH + H(+). The catalysed reaction is xanthine + O2 + H2O = urate + H2O2. Functionally, key enzyme in purine degradation. Catalyzes the oxidation of hypoxanthine to xanthine. Catalyzes the oxidation of xanthine to uric acid. Contributes to the generation of reactive oxygen species. The sequence is that of Xanthine dehydrogenase/oxidase (XDH) from Gallus gallus (Chicken).